Here is a 235-residue protein sequence, read N- to C-terminus: uncharacterized protein (235 aa).

It to E.coli YbeR.

This is an uncharacterized protein from Escherichia coli (strain K12).